The sequence spans 695 residues: GATA zinc finger domain-containing protein 16 (695 aa).

Disordered stretches follow at residues 82–111, 134–304, and 422–472; these read SPIL…SNNA, VVNS…QQDK, and NNQF…KMRY. Low complexity-rich tracts occupy residues 87–111 and 140–149; these read SQQQ…SNNA and KTTTTNNKPP. Residues 150 to 174 are a coiled coil; that stretch reads KQSKRKEKERLEEEKQTVAQQQQYQ. A compositionally biased stretch (basic and acidic residues) spans 155 to 165; that stretch reads KEKERLEEEKQ. Residues 199–209 show a composition bias toward polar residues; sequence VSTTPYGNSQF. Low complexity predominate over residues 210-298; that stretch reads NNNNNNNNNN…NSNSNNNNNN (89 aa). Residues 422-433 are compositionally biased toward polar residues; it reads NNQFSGDKQSAL. Positions 434-446 are enriched in low complexity; that stretch reads NNVKNSKGGNTNN. The GATA-type zinc finger occupies 479 to 504; the sequence is CHTCGVTNTPEWRRGPNGAKTLCNAC. Residues 523-646 are disordered; the sequence is NSTGVNITEP…TTNSITTPTT (124 aa). 2 stretches are compositionally biased toward low complexity: residues 544-556 and 564-646; these read DNNN…SDSN and GSNN…TPTT.

This Dictyostelium discoideum (Social amoeba) protein is GATA zinc finger domain-containing protein 16 (gtaP).